Consider the following 312-residue polypeptide: Taste receptor type 2 member 103 (312 aa).

The Extracellular segment spans residues 1–16 (MVVTMRAALRLMLIST). The helical transmembrane segment at 17-37 (VSLELIIGILANVFIALVNII) threads the bilayer. Topologically, residues 38–65 (DWIKRGKISAVDKIYMGLAISRTAFVLS) are cytoplasmic. The helical transmembrane segment at 66–86 (VITGFLIAFLDPASLGIGIMI) threads the bilayer. Topologically, residues 87–92 (RLLTMS) are extracellular. A helical membrane pass occupies residues 93 to 113 (WTVTNHFSVWFATCLSIFYFL). At 114–133 (KITNFSNTVFLALKWKVKKV) the chain is on the cytoplasmic side. Residues 134–154 (VSVTLVVSLIILFINVIVIHI) traverse the membrane as a helical segment. The Extracellular portion of the chain corresponds to 155–184 (YTDRFQVNMVQKCGANNTLRAYGLFLSIST). An N-linked (GlcNAc...) asparagine glycan is attached at N170. Residues 185 to 205 (VFTFIPFTASLTMFLLLIFSL) traverse the membrane as a helical segment. Over 206-229 (WRHLKTMHHNATGSRDVSTVAHIK) the chain is Cytoplasmic. The chain crosses the membrane as a helical span at residues 230-250 (GLQTVVAFLLLYTVFAMSLFS). At 251 to 264 (QSLSIDAQHTNLLS) the chain is on the extracellular side. A helical transmembrane segment spans residues 265 to 285 (HFLRCIGVAFPSGHSCALILG). At 286 to 312 (NNKLRQASLSVIFWLRCKYKHTENQGP) the chain is on the cytoplasmic side.

Belongs to the G-protein coupled receptor T2R family.

It is found in the membrane. Its function is as follows. Gustducin-coupled receptor implicated in the perception of bitter compounds in the oral cavity and the gastrointestinal tract. Signals through PLCB2 and the calcium-regulated cation channel TRPM5. In Rattus norvegicus (Rat), this protein is Taste receptor type 2 member 103.